The primary structure comprises 338 residues: 6-phosphogluconolactonase (338 aa).

The protein belongs to the cycloisomerase 2 family.

It catalyses the reaction 6-phospho-D-glucono-1,5-lactone + H2O = 6-phospho-D-gluconate + H(+). It functions in the pathway carbohydrate degradation; pentose phosphate pathway; D-ribulose 5-phosphate from D-glucose 6-phosphate (oxidative stage): step 2/3. Its function is as follows. Catalyzes the hydrolysis of 6-phosphogluconolactone to 6-phosphogluconate. This is 6-phosphogluconolactonase from Blochmanniella floridana.